Consider the following 866-residue polypeptide: Primer-independent DNA polymerase PolB (866 aa).

Positions 50-286 are exonuclease domain; that stretch reads SDLTLHIGFD…DRVPATIGAM (237 aa). A palm1 domain region spans residues 287 to 385; that stretch reads AVSRFTKTLK…GLLDILTPDY (99 aa). The tract at residues 386 to 481 is TPR1 domain; the sequence is GNIRLSKNPD…NSESTSVFLP (96 aa). The tract at residues 482-522 is fingers domain; sequence FVQQVRENRNRHIKGSLEEKFWKEIGNSLYGKLAQGLRAKT. Residues 523-549 are TPR2 domain; sequence AFDTARGLNRSLPPSSVTQPFFAAHVT. Positions 550-678 are palm2 domain; that stretch reads GFIRAVVGEL…PGQTLSRSTL (129 aa). Residues 679–866 are thumb domain; sequence ISTREMWLSE…RKYPTFCLPV (188 aa).

Requires Mn(2+) as cofactor.

The catalysed reaction is DNA(n) + a 2'-deoxyribonucleoside 5'-triphosphate = DNA(n+1) + diphosphate. DNA polymerase with primer-independent templated DNA polymerization activity, primer-dependent DNA polymerization activity with strand displacement, translesion synthesis activity across non-bulky base damage, 3'-5' exodeoxyribonuclease activity, and de novo primer synthesis activity. The enzyme is processive and faithful. Translation synthesis across abasic sites is coupled to de novo primer synthesis. Overexpression of wild-type protein increases survival of cells upon mitomycin C or UV treatment. In Escherichia coli, this protein is Primer-independent DNA polymerase PolB (pi-polB).